Reading from the N-terminus, the 309-residue chain is ADP-L-glycero-D-manno-heptose-6-epimerase (309 aa).

Residues Phe10–Ile11, Asp31–Asn32, Lys38, Lys53, Leu75–Ser79, and Asn92 each bind NADP(+). Residue Tyr140 is the Proton acceptor of the active site. Lys144 serves as a coordination point for NADP(+). Substrate is bound at residue Asn169. NADP(+)-binding residues include Val170 and Lys178. Lys178 functions as the Proton acceptor in the catalytic mechanism. Residues Ser180, His187, Phe201–Ser204, Arg209, and Tyr272 each bind substrate.

It belongs to the NAD(P)-dependent epimerase/dehydratase family. HldD subfamily. In terms of assembly, homopentamer. The cofactor is NADP(+).

The enzyme catalyses ADP-D-glycero-beta-D-manno-heptose = ADP-L-glycero-beta-D-manno-heptose. It participates in nucleotide-sugar biosynthesis; ADP-L-glycero-beta-D-manno-heptose biosynthesis; ADP-L-glycero-beta-D-manno-heptose from D-glycero-beta-D-manno-heptose 7-phosphate: step 4/4. In terms of biological role, catalyzes the interconversion between ADP-D-glycero-beta-D-manno-heptose and ADP-L-glycero-beta-D-manno-heptose via an epimerization at carbon 6 of the heptose. The sequence is that of ADP-L-glycero-D-manno-heptose-6-epimerase from Hamiltonella defensa subsp. Acyrthosiphon pisum (strain 5AT).